A 126-amino-acid polypeptide reads, in one-letter code: Histone H2B 1.1 (126 aa).

Over residues 1–12 the composition is skewed to low complexity; that stretch reads MPEPAKSAPAPK. The interval 1–35 is disordered; that stretch reads MPEPAKSAPAPKKGSKKAVTKTQKKDGKKRRKSRK. 2 positions are modified to N6-acetyllysine: Lys-6 and Lys-13. Ser-15 is modified (phosphoserine). N6-acetyllysine is present on residues Lys-16 and Lys-21. Ser-113 is a glycosylation site (O-linked (GlcNAc) serine). A Glycyl lysine isopeptide (Lys-Gly) (interchain with G-Cter in ubiquitin) cross-link involves residue Lys-121.

This sequence belongs to the histone H2B family. In terms of assembly, the nucleosome is a histone octamer containing two molecules each of H2A, H2B, H3 and H4 assembled in one H3-H4 heterotetramer and two H2A-H2B heterodimers. The octamer wraps approximately 147 bp of DNA. Monoubiquitination of Lys-121 by BRE1 gives a specific tag for epigenetic transcriptional activation and is also prerequisite for histone H3 'Lys-4' and 'Lys-79' methylation. Post-translationally, phosphorylated on Ser-15 during developmentally programmed apoptosis; which may facilitate apoptotic chromatin condensation. In terms of processing, glcNAcylation at Ser-113 promotes monoubiquitination of Lys-121. It fluctuates in response to extracellular glucose, and associates with transcribed genes.

Its subcellular location is the nucleus. It localises to the chromosome. Functionally, core component of nucleosome. Nucleosomes wrap and compact DNA into chromatin, limiting DNA accessibility to the cellular machineries which require DNA as a template. Histones thereby play a central role in transcription regulation, DNA repair, DNA replication and chromosomal stability. DNA accessibility is regulated via a complex set of post-translational modifications of histones, also called histone code, and nucleosome remodeling. The polypeptide is Histone H2B 1.1 (Xenopus laevis (African clawed frog)).